A 558-amino-acid chain; its full sequence is Potassium-transporting ATPase potassium-binding subunit 1 (558 aa).

A run of 12 helical transmembrane segments spans residues 1 to 21 (MEIILFLTMMVMIAYVFSGYL), 66 to 86 (FNGFMGVITFVLLIVQQWLFL), 127 to 147 (MIVMTYLMFTSSASGYAVCIA), 166 to 186 (IVRFIVRVLLPLSCLISILLM), 245 to 265 (IWSNFIEMGSMMLLPMSMLFL), 281 to 301 (ALILFVAMFFIFIAILTLTMW), 327 to 347 (FGAGLSALFTVITTAFTTGSV), 354 to 374 (LTPLGGLGPMVLMMLNVVFGG), 377 to 397 (VGLMNLLIYVLLTLFICSLMV), 416 to 436 (IVLVFLIHPILILVFSALAFM), 482 to 502 (ISTGIIMLLSRYIPIILQLMI), and 531 to 551 (IVFIVLLSGLTFIPVLLLGPI).

Belongs to the KdpA family. In terms of assembly, the system is composed of three essential subunits: KdpA, KdpB and KdpC.

Its subcellular location is the cell membrane. Functionally, part of the high-affinity ATP-driven potassium transport (or Kdp) system, which catalyzes the hydrolysis of ATP coupled with the electrogenic transport of potassium into the cytoplasm. This subunit binds the extracellular potassium ions and delivers the ions to the membrane domain of KdpB through an intramembrane tunnel. The protein is Potassium-transporting ATPase potassium-binding subunit 1 of Staphylococcus aureus (strain MRSA252).